A 292-amino-acid polypeptide reads, in one-letter code: Elongation factor Ts (292 aa).

The segment at 79–82 (TDFV) is involved in Mg(2+) ion dislocation from EF-Tu.

It belongs to the EF-Ts family.

The protein resides in the cytoplasm. Functionally, associates with the EF-Tu.GDP complex and induces the exchange of GDP to GTP. It remains bound to the aminoacyl-tRNA.EF-Tu.GTP complex up to the GTP hydrolysis stage on the ribosome. The polypeptide is Elongation factor Ts (Mycoplasmoides gallisepticum (strain R(low / passage 15 / clone 2)) (Mycoplasma gallisepticum)).